The chain runs to 273 residues: Eukaryotic translation initiation factor 3 subunit G-2 (273 aa).

Residues 193–271 enclose the RRM domain; sequence SAVRISNLSE…LILCVEWSKP (79 aa).

The protein belongs to the eIF-3 subunit G family. As to quaternary structure, component of the eukaryotic translation initiation factor 3 (eIF-3) complex. The eIF-3 complex interacts with pix.

The protein localises to the cytoplasm. In terms of biological role, RNA-binding component of the eukaryotic translation initiation factor 3 (eIF-3) complex, which is involved in protein synthesis of a specialized repertoire of mRNAs and, together with other initiation factors, stimulates binding of mRNA and methionyl-tRNAi to the 40S ribosome. The eIF-3 complex specifically targets and initiates translation of a subset of mRNAs involved in cell proliferation. This subunit can bind 18S rRNA. This chain is Eukaryotic translation initiation factor 3 subunit G-2, found in Drosophila melanogaster (Fruit fly).